A 1034-amino-acid chain; its full sequence is Vacuolar membrane protease (1034 aa).

Residues 1 to 11 (MAVKNPFGFTT) are Cytoplasmic-facing. Residues 12–32 (GPVTFWLIVVYAAFLIPLVWI) traverse the membrane as a helical segment. Topologically, residues 33-418 (HESVPAVPSS…GFAILELRGL (386 aa)) are vacuolar. 2 N-linked (GlcNAc...) asparagine glycosylation sites follow: N51 and N141. Zn(2+) is bound by residues H200 and D212. E246 acts as the Proton acceptor in catalysis. Zn(2+) contacts are provided by E247, E272, and H345. A helical transmembrane segment spans residues 419 to 439 (FAWTLTLLIVSPLVLALVTYI). Over 440 to 470 (LSRKDKYYFFSRKVTADEDDEPVSVGGWKGF) the chain is Cytoplasmic. The chain crosses the membrane as a helical span at residues 471–491 (FRFPFALVLSASITVLSAFLI). Topologically, residues 492 to 497 (RRVNPH) are vacuolar. The helical transmembrane segment at 498–518 (IIYSSPYAVWAMTLSLFFLVF) threads the bilayer. Residues 519–536 (WTIAKGASVVRPSALQRG) are Cytoplasmic-facing. Residues 537–557 (YAHIWLFVISWVILVAVTAAA) form a helical membrane-spanning segment. Topologically, residues 558–567 (DRFKIASGYP) are vacuolar. The helical transmembrane segment at 568–588 (FAFFHSAVFVSALISLCDLFA) threads the bilayer. Over 589–703 (LPSKQEFARN…NLPSWTWFFQ (115 aa)) the chain is Cytoplasmic. The segment at 623-653 (HSHVEDDVAEEPTETTPLRSGENGNGNNGTI) is disordered. A helical membrane pass occupies residues 704–724 (LLLLAPITITVFLQIALFIVS). Topologically, residues 725 to 736 (AIHSAAADGNDP) are vacuolar. A helical membrane pass occupies residues 737–757 (ILVYAAIAAFSIIILLPATPF). Topologically, residues 758–762 (IHRAS) are cytoplasmic. Residues 763–783 (FYLPLFLLLVFFVTLIYNLVA) form a helical membrane-spanning segment. Topologically, residues 784–1034 (FPFSAENRLK…LVEGRKKFRA (251 aa)) are vacuolar. N-linked (GlcNAc...) asparagine glycans are attached at residues N805, N866, and N879.

It belongs to the peptidase M28 family. It depends on Zn(2+) as a cofactor.

Its subcellular location is the vacuole membrane. Functionally, may be involved in vacuolar sorting and osmoregulation. This chain is Vacuolar membrane protease, found in Colletotrichum graminicola (strain M1.001 / M2 / FGSC 10212) (Maize anthracnose fungus).